A 233-amino-acid polypeptide reads, in one-letter code: UPF0758 protein Rcas_0037 (233 aa).

The MPN domain occupies 107–229; it reads QIRSPTDAAQ…FVSMRERGLA (123 aa). Residues histidine 178, histidine 180, and aspartate 191 each coordinate Zn(2+). Residues 178 to 191 carry the JAMM motif motif; that stretch reads HNHPSGDPTPSPED.

Belongs to the UPF0758 family.

This is UPF0758 protein Rcas_0037 from Roseiflexus castenholzii (strain DSM 13941 / HLO8).